Consider the following 153-residue polypeptide: ATP synthase subunit b' (153 aa).

A helical membrane pass occupies residues 20–40; sequence TLPLMAVQVVLLTFILNALFF.

It belongs to the ATPase B chain family. F-type ATPases have 2 components, F(1) - the catalytic core - and F(0) - the membrane proton channel. F(1) has five subunits: alpha(3), beta(3), gamma(1), delta(1), epsilon(1). F(0) has four main subunits: a(1), b(1), b'(1) and c(10-14). The alpha and beta chains form an alternating ring which encloses part of the gamma chain. F(1) is attached to F(0) by a central stalk formed by the gamma and epsilon chains, while a peripheral stalk is formed by the delta, b and b' chains.

The protein resides in the cellular thylakoid membrane. Functionally, f(1)F(0) ATP synthase produces ATP from ADP in the presence of a proton or sodium gradient. F-type ATPases consist of two structural domains, F(1) containing the extramembraneous catalytic core and F(0) containing the membrane proton channel, linked together by a central stalk and a peripheral stalk. During catalysis, ATP synthesis in the catalytic domain of F(1) is coupled via a rotary mechanism of the central stalk subunits to proton translocation. Component of the F(0) channel, it forms part of the peripheral stalk, linking F(1) to F(0). The b'-subunit is a diverged and duplicated form of b found in plants and photosynthetic bacteria. This Prochlorococcus marinus (strain MIT 9211) protein is ATP synthase subunit b'.